The chain runs to 62 residues: MLDPNLLDILVCPVSKAPLIYDEKTAELKCKASGLAYPVRDGIPVMLEEQARAMSDEEALSL.

The protein belongs to the UPF0434 family.

The polypeptide is UPF0434 protein ABO_2103 (Alcanivorax borkumensis (strain ATCC 700651 / DSM 11573 / NCIMB 13689 / SK2)).